We begin with the raw amino-acid sequence, 116 residues long: uncharacterized protein (116 aa).

Transmembrane regions (helical) follow at residues 40–60 (AIVKVDFFSFDGAGFCIIGIL) and 72–92 (FLGSICRSIFSIVAQMQVVPI).

The protein resides in the membrane. This is an uncharacterized protein from Saccharomyces cerevisiae (strain ATCC 204508 / S288c) (Baker's yeast).